A 301-amino-acid polypeptide reads, in one-letter code: tRNA pseudouridine synthase B (301 aa).

Residue D38 is the Nucleophile of the active site.

The protein belongs to the pseudouridine synthase TruB family. Type 1 subfamily.

It catalyses the reaction uridine(55) in tRNA = pseudouridine(55) in tRNA. Its function is as follows. Responsible for synthesis of pseudouridine from uracil-55 in the psi GC loop of transfer RNAs. This is tRNA pseudouridine synthase B from Ehrlichia canis (strain Jake).